The sequence spans 410 residues: Gamma-glutamyl phosphate reductase (410 aa).

Belongs to the gamma-glutamyl phosphate reductase family.

It localises to the cytoplasm. The catalysed reaction is L-glutamate 5-semialdehyde + phosphate + NADP(+) = L-glutamyl 5-phosphate + NADPH + H(+). The protein operates within amino-acid biosynthesis; L-proline biosynthesis; L-glutamate 5-semialdehyde from L-glutamate: step 2/2. In terms of biological role, catalyzes the NADPH-dependent reduction of L-glutamate 5-phosphate into L-glutamate 5-semialdehyde and phosphate. The product spontaneously undergoes cyclization to form 1-pyrroline-5-carboxylate. This Sulfurovum sp. (strain NBC37-1) protein is Gamma-glutamyl phosphate reductase.